Consider the following 170-residue polypeptide: Protein-lysine myristoyltransferase HlyC (170 aa).

Residues His23 and Asp92 contribute to the active site. His151 provides a ligand contact to heme.

It belongs to the RTX toxin acyltransferase family. As to quaternary structure, monomer. In terms of processing, proteolytically cleaved by the protease systems ClpAP, ClpXP and FtsH, leading to its degradation.

Its subcellular location is the cytoplasm. It carries out the reaction tetradecanoyl-[ACP] + L-lysyl-[protein] = N(6)-tetradecanoyl-L-lysyl-[protein] + holo-[ACP] + H(+). The acyltransferase activity is inhibited by heme. Protein-lysine myristoyltransferase that catalyzes myristoylation of the protoxin (HlyA) at two internal lysine residues, thereby converting it to the active toxin. This Escherichia coli protein is Protein-lysine myristoyltransferase HlyC.